The chain runs to 1676 residues: DNA-directed RNA polymerase subunit beta'-beta'' (1676 aa).

The interval 1–582 (MCDAIQIRLA…FLKTTPGRII (582 aa)) is DNA-directed RNA polymerase subunit beta'. Zn(2+) contacts are provided by cysteine 64, cysteine 66, cysteine 79, and cysteine 82. Mg(2+) contacts are provided by aspartate 454, aspartate 456, and aspartate 458. The DNA-directed RNA polymerase subunit beta'' stretch occupies residues 583-1676 (FYQQAAYHVG…IPAGTGAKYL (1094 aa)). Zn(2+) contacts are provided by cysteine 804, cysteine 859, cysteine 866, and cysteine 869.

It in the N-terminal section; belongs to the RNA polymerase beta' chain family. RpoC1 subfamily. The protein in the C-terminal section; belongs to the RNA polymerase beta' chain family. RpoC2 subfamily. In plastids the minimal PEP RNA polymerase catalytic core is composed of four subunits: alpha, beta, beta', and beta''. When a (nuclear-encoded) sigma factor is associated with the core the holoenzyme is formed, which can initiate transcription. Beta' and beta'' are fused in this algae. Mg(2+) is required as a cofactor. Zn(2+) serves as cofactor.

Its subcellular location is the plastid. It localises to the chloroplast. The enzyme catalyses RNA(n) + a ribonucleoside 5'-triphosphate = RNA(n+1) + diphosphate. In terms of biological role, DNA-dependent RNA polymerase catalyzes the transcription of DNA into RNA using the four ribonucleoside triphosphates as substrates. This chain is DNA-directed RNA polymerase subunit beta'-beta'', found in Cyanidioschyzon merolae (strain NIES-3377 / 10D) (Unicellular red alga).